The sequence spans 993 residues: ATP-dependent DNA helicase MPH1 (993 aa).

The Helicase ATP-binding domain maps to 94–261 (IVHKSLFQNT…EVVNNLDISK (168 aa)). ATP is bound at residue 107-114 (IPTGMGKT). The short motif at 209 to 212 (DEAH) is the DEAH box element. Positions 507-655 (KVERLHRQEQ…CIDYKKSDRI (149 aa)) constitute a Helicase C-terminal domain. The disordered stretch occupies residues 530–551 (NDKLERSARRTGSSEEAQISGM). Residues 539-551 (RTGSSEEAQISGM) are compositionally biased toward polar residues. Positions 751 to 810 (LVTSNENPSKKRKIFKALDNLENDSTEEASSSLETEDEEVSDDNNVFIAEGQNGCQKDLE) are FKH1-binding region. 2 positions are modified to phosphothreonine: Thr776 and Thr785.

Belongs to the DEAD box helicase family. DEAH subfamily. FANCM sub-subfamily. Interacts with the MHF histone-fold complex composed of MHF1 and MHF2 to form the FANCM-MHF complex. Interacts with FHK1. Post-translationally, phosphorylation at both Thr-776 and Thr-785 is required for the interaction with FKH1.

The protein resides in the nucleus. It catalyses the reaction ATP + H2O = ADP + phosphate + H(+). In terms of biological role, ATP-dependent DNA helicase involved in DNA damage repair by homologous recombination and in genome maintenance. Capable of unwinding D-loops. Plays a role in limiting crossover recombinants during mitotic DNA double-strand break (DSB) repair. Prevents crossovers between ectopic sequences by removing substrates for MUS81-MMS4 or RAD1-RAD10 cleavage. Component of a FANCM-MHF complex which promotes gene conversion at blocked replication forks, probably by reversal of the stalled fork. Binds to flap-structured DNA but not to non-flap nicked DNA, and participates in Okazaki fragment processing by stimulating the endonuclease activities of FEN1 and DNA2. Involved in recombination donor preference during mating-type switching via interaction with FKH1. The protein is ATP-dependent DNA helicase MPH1 of Saccharomyces cerevisiae (strain ATCC 204508 / S288c) (Baker's yeast).